A 165-amino-acid polypeptide reads, in one-letter code: Cystatin-like protein (165 aa).

Positions 1–19 (MDVALKLLLLAALTLLASA) are cleaved as a signal peptide. Disulfide bonds link Cys80/Cys92 and Cys104/Cys118.

Involved in hypoxia tolerance. This Clarias batrachus (Walking catfish) protein is Cystatin-like protein.